The following is an 85-amino-acid chain: Coiled-coil-helix-coiled-coil-helix domain-containing protein 7 (85 aa).

The 43-residue stretch at 13–55 (INPCLSESDASTRCLDENNYDRERCSTYFLRYKNCRRFWNSIV) folds into the CHCH domain. 2 short sequence motifs (cx9C motif) span residues 16–26 (CLSESDASTRC) and 37–47 (CSTYFLRYKNC). 2 cysteine pairs are disulfide-bonded: Cys-16–Cys-47 and Cys-26–Cys-37.

Belongs to the CHCHD7 family. In terms of assembly, monomer.

The protein localises to the mitochondrion intermembrane space. This is Coiled-coil-helix-coiled-coil-helix domain-containing protein 7 (CHCHD7) from Homo sapiens (Human).